The chain runs to 142 residues: Large ribosomal subunit protein uL11 (142 aa).

It belongs to the universal ribosomal protein uL11 family. In terms of assembly, part of the ribosomal stalk of the 50S ribosomal subunit. Interacts with L10 and the large rRNA to form the base of the stalk. L10 forms an elongated spine to which L12 dimers bind in a sequential fashion forming a multimeric L10(L12)X complex. In terms of processing, one or more lysine residues are methylated.

Forms part of the ribosomal stalk which helps the ribosome interact with GTP-bound translation factors. In Sinorhizobium medicae (strain WSM419) (Ensifer medicae), this protein is Large ribosomal subunit protein uL11.